Consider the following 142-residue polypeptide: Complexin (142 aa).

Disordered regions lie at residues 13-70 and 83-105; these read QLSA…MRQD and IVEA…PEEL. Residues 29 to 138 adopt a coiled-coil conformation; the sequence is GDDKEKAEEE…NELKTQIEGK (110 aa). Basic and acidic residues predominate over residues 31-70; that stretch reads DKEKAEEEERERQEAIKEAEDRRKEKHRKMEEEREKMRQD. Cys-139 bears the Cysteine methyl ester mark. A lipid anchor (S-farnesyl cysteine) is attached at Cys-139. The propeptide at 140-142 is removed in mature form; sequence VMQ.

The protein belongs to the complexin/synaphin family. In terms of assembly, binds to the SNARE core complex containing Snap25, synaptobrevin and Syx1A.

The protein localises to the membrane. Positively regulates a late step in synaptic vesicle exocytosis. In Drosophila melanogaster (Fruit fly), this protein is Complexin (cpx).